Here is a 364-residue protein sequence, read N- to C-terminus: Protein BRI1-5 ENHANCED 1 (364 aa).

The span at 1–11 (MVREEQEEDDN) shows a compositional bias: acidic residues. The segment at 1–22 (MVREEQEEDDNNNNNNGGGERK) is disordered. Residues 44–49 (GGSGFV), Arg-69, 98–99 (DL), Tyr-202, Lys-206, Val-232, and Ser-244 each bind NADP(+). Residue Lys-206 is the Proton donor of the active site.

Belongs to the NAD(P)-dependent epimerase/dehydratase family. As to quaternary structure, monomer. Mainly present in cell elongating-containing tissues. Strongly expressed in roots and flowers, also observed in petioles, stems, leaves and siliques.

It is found in the cytoplasm. It functions in the pathway plant hormone biosynthesis; brassinosteroid biosynthesis. Functionally, element of the brassinosteroid metabolic pathway that regulates typhasterol (TY), castasterone (CS) and brassinolide (BL) levels. Involved in the control of organ elongation. The chain is Protein BRI1-5 ENHANCED 1 from Arabidopsis thaliana (Mouse-ear cress).